We begin with the raw amino-acid sequence, 1127 residues long: Major DNA-binding protein (1127 aa).

The segment at 1098-1127 (QVKLTSMDHSGKVVGGKKRKIATMFDDLDL) is required for nuclear localization.

This sequence belongs to the herpesviridae major DNA-binding protein family. Homooligomers. Forms double-helical filaments necessary for the formation of replication compartments within the host nucleus. Interacts with the origin-binding protein. Interacts with the helicase primase complex; this interaction stimulates primer synthesis activity of the helicase-primase complex. Interacts with the DNA polymerase. Interacts with the alkaline exonuclease; this interaction increases its nuclease processivity.

The protein localises to the host nucleus. Its function is as follows. Plays several crucial roles in viral infection. Participates in the opening of the viral DNA origin to initiate replication by interacting with the origin-binding protein. May disrupt loops, hairpins and other secondary structures present on ssDNA to reduce and eliminate pausing of viral DNA polymerase at specific sites during elongation. Promotes viral DNA recombination by performing strand-transfer, characterized by the ability to transfer a DNA strand from a linear duplex to a complementary single-stranded DNA circle. Can also catalyze the renaturation of complementary single strands. Additionally, reorganizes the host cell nucleus, leading to the formation of prereplicative sites and replication compartments. This process is driven by the protein which can form double-helical filaments in the absence of DNA. The polypeptide is Major DNA-binding protein (Alcelaphine herpesvirus 1 (strain C500) (AlHV-1)).